The sequence spans 26 residues: Acetyl-CoA acetyltransferase (26 aa).

Residue C21 is the Acyl-thioester intermediate of the active site.

Belongs to the thiolase-like superfamily. Thiolase family. Homotetramer. In terms of processing, succinylation, adjacent to a coenzyme A binding site. Desuccinylated by SIRT5.

The protein resides in the mitochondrion. The catalysed reaction is 2 acetyl-CoA = acetoacetyl-CoA + CoA. This chain is Acetyl-CoA acetyltransferase, found in Sus scrofa (Pig).